The primary structure comprises 349 residues: Peroxidase 7 (349 aa).

The N-terminal stretch at 1-22 is a signal peptide; the sequence is MKLAVVSVVVILGVLVAWPVSA. Disulfide bonds link Cys60-Cys136, Cys93-Cys98, Cys142-Cys341, and Cys220-Cys252. His91 acts as the Proton acceptor in catalysis. The Ca(2+) site is built by Asp92, Val95, Gly97, Asp99, and Ser101. Pro183 is a binding site for substrate. His213 contributes to the heme b binding site. Thr214 contributes to the Ca(2+) binding site. A glycan (N-linked (GlcNAc...) asparagine) is linked at Asn231. The Ca(2+) site is built by Asp262, Thr265, and Asp270.

This sequence belongs to the peroxidase family. Classical plant (class III) peroxidase subfamily. It depends on heme b as a cofactor. Ca(2+) is required as a cofactor.

The protein localises to the secreted. The enzyme catalyses 2 a phenolic donor + H2O2 = 2 a phenolic radical donor + 2 H2O. In terms of biological role, removal of H(2)O(2), oxidation of toxic reductants, biosynthesis and degradation of lignin, suberization, auxin catabolism, response to environmental stresses such as wounding, pathogen attack and oxidative stress. These functions might be dependent on each isozyme/isoform in each plant tissue. The protein is Peroxidase 7 (PER7) of Arabidopsis thaliana (Mouse-ear cress).